A 378-amino-acid chain; its full sequence is Putative F-box/kelch-repeat protein At3g43710 (378 aa).

Residues 23–69 (TFGIEMLPDDLVLSCLARVPRMYYPILSLVSKRFRSFLTSTELYQTR) enclose the F-box domain. 3 Kelch repeats span residues 130–176 (NIYV…VLDG), 178–227 (IYVA…GYDG), and 262–308 (SQCV…VPTK).

The protein is Putative F-box/kelch-repeat protein At3g43710 of Arabidopsis thaliana (Mouse-ear cress).